Reading from the N-terminus, the 277-residue chain is 2-dehydro-3-deoxyphosphooctonate aldolase (277 aa).

Belongs to the KdsA family.

The protein localises to the cytoplasm. The enzyme catalyses D-arabinose 5-phosphate + phosphoenolpyruvate + H2O = 3-deoxy-alpha-D-manno-2-octulosonate-8-phosphate + phosphate. The protein operates within carbohydrate biosynthesis; 3-deoxy-D-manno-octulosonate biosynthesis; 3-deoxy-D-manno-octulosonate from D-ribulose 5-phosphate: step 2/3. Its pathway is bacterial outer membrane biogenesis; lipopolysaccharide biosynthesis. The protein is 2-dehydro-3-deoxyphosphooctonate aldolase of Brucella abortus (strain S19).